A 553-amino-acid chain; its full sequence is Fusion glycoprotein F0 (553 aa).

The first 31 residues, 1-31, serve as a signal peptide directing secretion; sequence MGSRSSTRIPVPLMLTVRIMLALSCVCPTSS. Residues 32 to 500 lie on the Extracellular side of the membrane; that stretch reads LDGRPLAAAG…VNVKLTSTSA (469 aa). Disulfide bonds link Cys76/Cys199, Cys338/Cys347, Cys362/Cys370, Cys394/Cys399, and Cys401/Cys424. Residue Asn85 is glycosylated (N-linked (GlcNAc...) asparagine; by host). The tract at residues 117-141 is fusion peptide; the sequence is LIGAIIGGVALGVATAAQITAASAL. A coiled-coil region spans residues 142-170; it reads IQANQNAANILRLKESIAATNEAVHEVTD. An N-linked (GlcNAc...) asparagine; by host glycan is attached at Asn191. N-linked (GlcNAc...) asparagine; by host glycosylation occurs at Asn366. N-linked (GlcNAc...) asparagine; by host glycans are attached at residues Asn447 and Asn471. A coiled-coil region spans residues 466-491; sequence ELGNVNNSISNALDKLEESNSKLDKV. Residues 501–521 form a helical membrane-spanning segment; that stretch reads LITYIFLTVISLVCGILSLVL. The Cytoplasmic portion of the chain corresponds to 522-553; that stretch reads ACYLMYKQKAQQKTLLWLGNNTLDQMRATTKM. Cys523 carries S-palmitoyl cysteine; by host lipidation.

This sequence belongs to the paramyxoviruses fusion glycoprotein family. In terms of assembly, homotrimer of disulfide-linked F1-F2. The inactive precursor F0 is glycosylated and proteolytically cleaved into F1 and F2 to be functionally active. The cleavage is mediated by cellular proteases during the transport and maturation of the polypeptide.

The protein localises to the virion membrane. Its subcellular location is the host cell membrane. Class I viral fusion protein. Under the current model, the protein has at least 3 conformational states: pre-fusion native state, pre-hairpin intermediate state, and post-fusion hairpin state. During viral and plasma cell membrane fusion, the heptad repeat (HR) regions assume a trimer-of-hairpins structure, positioning the fusion peptide in close proximity to the C-terminal region of the ectodomain. The formation of this structure appears to drive apposition and subsequent fusion of viral and plasma cell membranes. Directs fusion of viral and cellular membranes leading to delivery of the nucleocapsid into the cytoplasm. This fusion is pH independent and occurs directly at the outer cell membrane. The trimer of F1-F2 (F protein) probably interacts with HN at the virion surface. Upon HN binding to its cellular receptor, the hydrophobic fusion peptide is unmasked and interacts with the cellular membrane, inducing the fusion between cell and virion membranes. Later in infection, F proteins expressed at the plasma membrane of infected cells could mediate fusion with adjacent cells to form syncytia, a cytopathic effect that could lead to tissue necrosis. In Newcastle disease virus (strain D26/76) (NDV), this protein is Fusion glycoprotein F0 (F).